The primary structure comprises 297 residues: MTEENIRQIAFYGKGGIGKSTTSQNTLAAMAEMGQRILIVGCDPKADSTRLMLHSKAQTTVLHLAAERGAVEDIEIEEVMLTGFRNVRCVESGGPEPGVGCAGRGIITAINFLEENGAYQDLDFVSYDVLGDVVCGGFAMPIREGKAQEIYIVTSGEMMAMYAANNIARGVLKYAHTGGVRLGGLICNSRNTDREIELIETLAKRLNTQMIHYVPRDNIVQHAELRRMTVNEYAPESNQANEYRILAQKIIDNKNLAIPTPIEMEELEELLIEFGILESDENTAMLVGKTATEAPVV.

Residue 13–20 (GKGGIGKS) coordinates ATP. Cysteine 101 is a [4Fe-4S] cluster binding site. At arginine 104 the chain carries ADP-ribosylarginine; by dinitrogenase reductase ADP-ribosyltransferase. Residue cysteine 135 participates in [4Fe-4S] cluster binding.

It belongs to the NifH/BchL/ChlL family. Homodimer. The cofactor is [4Fe-4S] cluster. In terms of processing, the reversible ADP-ribosylation of Arg-104 inactivates the nitrogenase reductase and regulates nitrogenase activity.

The enzyme catalyses N2 + 8 reduced [2Fe-2S]-[ferredoxin] + 16 ATP + 16 H2O = H2 + 8 oxidized [2Fe-2S]-[ferredoxin] + 2 NH4(+) + 16 ADP + 16 phosphate + 6 H(+). Its function is as follows. The key enzymatic reactions in nitrogen fixation are catalyzed by the nitrogenase complex, which has 2 components: the iron protein and the molybdenum-iron protein. This chain is Nitrogenase iron protein (nifH), found in Nostoc commune.